Consider the following 410-residue polypeptide: Chitin deacetylase 3 (410 aa).

A signal peptide spans 1-18 (MYGHLSLSTLSLLAVVAA). The propeptide occupies 19 to 39 (APFHESWLQPRDSDVSQLFRR). 2 N-linked (GlcNAc...) asparagine glycosylation sites follow: asparagine 61 and asparagine 80. The NodB homology domain maps to 124-314 (KVWALSFDDG…KAVANGWSVK (191 aa)). The Proton acceptor role is filled by aspartate 131. Aspartate 131 contributes to the acetate binding site. Aspartate 132 contacts Co(2+). N-linked (GlcNAc...) asparagine glycosylation is present at asparagine 149. 2 residues coordinate Co(2+): histidine 183 and histidine 187. Tyrosine 225 serves as a coordination point for acetate. An N-linked (GlcNAc...) asparagine glycan is attached at asparagine 279. Histidine 289 (proton donor) is an active-site residue. Asparagine 293 carries N-linked (GlcNAc...) asparagine glycosylation. Serine 385 is lipidated: GPI-anchor amidated serine. A propeptide spans 386 to 410 (SSWPIANRPSLFVIACGLALAAIMV) (removed in mature form).

Belongs to the polysaccharide deacetylase family. Co(2+) serves as cofactor.

The protein resides in the cell membrane. The catalysed reaction is [(1-&gt;4)-N-acetyl-beta-D-glucosaminyl](n) + n H2O = chitosan + n acetate. Hydrolyzes the N-acetamido groups of N-acetyl-D-glucosamine residues in chitin to form chitosan and acetate. Chitosan is required to anchor melanin to the cell wall, for maintenance of cell wall integrity, and for proper cytokinesis. Chitosan offers an advantage during infection as it is less readily detected than chitin by host immunosurveillance mechanisms. This Cryptococcus neoformans var. neoformans serotype D (strain B-3501A) (Filobasidiella neoformans) protein is Chitin deacetylase 3.